Here is a 141-residue protein sequence, read N- to C-terminus: Galactose-6-phosphate isomerase subunit LacA (141 aa).

Belongs to the LacAB/RpiB family. In terms of assembly, heteromultimeric protein consisting of LacA and LacB.

It catalyses the reaction aldehydo-D-galactose 6-phosphate = keto-D-tagatose 6-phosphate. Its pathway is carbohydrate metabolism; D-galactose 6-phosphate degradation; D-tagatose 6-phosphate from D-galactose 6-phosphate: step 1/1. In Streptococcus pneumoniae (strain ATCC 700669 / Spain 23F-1), this protein is Galactose-6-phosphate isomerase subunit LacA.